The chain runs to 150 residues: Large ribosomal subunit protein bL9 (150 aa).

It belongs to the bacterial ribosomal protein bL9 family.

Its function is as follows. Binds to the 23S rRNA. This Staphylococcus aureus (strain NCTC 8325 / PS 47) protein is Large ribosomal subunit protein bL9.